Consider the following 270-residue polypeptide: Secreted RxLR effector protein 149 (270 aa).

Positions 1-21 (MRNGVVLFGLFFIGYSSCVLA) are cleaved as a signal peptide. The RxLR-dEER motif lies at 43–58 (RTLQADDPERILAEER).

Belongs to the RxLR effector family.

The protein resides in the secreted. It is found in the host nucleus. It localises to the host cytoplasm. Functionally, secreted effector that completely suppresses the host cell death induced by cell death-inducing proteins. This Plasmopara viticola (Downy mildew of grapevine) protein is Secreted RxLR effector protein 149.